Here is a 204-residue protein sequence, read N- to C-terminus: Ribonuclease HII (204 aa).

The region spanning Met-1–Leu-197 is the RNase H type-2 domain. Residues Asp-6, Glu-7, and Asp-103 each coordinate a divalent metal cation.

This sequence belongs to the RNase HII family. Requires Mn(2+) as cofactor. Mg(2+) is required as a cofactor.

It localises to the cytoplasm. The catalysed reaction is Endonucleolytic cleavage to 5'-phosphomonoester.. Functionally, endonuclease that specifically degrades the RNA of RNA-DNA hybrids. This is Ribonuclease HII from Helicobacter pylori (strain P12).